We begin with the raw amino-acid sequence, 263 residues long: Ribosome maturation factor RimP (263 aa).

The interval 192-263 is disordered; it reads EREMKRDLGI…RGEIDPIEGE (72 aa). The segment covering 217–231 has biased composition (basic residues); the sequence is PARRNAPKPKLKSTA. Residues 232–257 are compositionally biased toward basic and acidic residues; that stretch reads KAHEKKPPKNTKEHRLAAERLRRGEI.

This sequence belongs to the RimP family.

The protein resides in the cytoplasm. Required for maturation of 30S ribosomal subunits. This is Ribosome maturation factor RimP from Nitrobacter hamburgensis (strain DSM 10229 / NCIMB 13809 / X14).